Consider the following 143-residue polypeptide: Large-conductance mechanosensitive channel (143 aa).

Helical transmembrane passes span 10–30 (FAVK…GAFS) and 89–109 (GSFI…FLMV).

It belongs to the MscL family. In terms of assembly, homopentamer.

It is found in the cell inner membrane. Functionally, channel that opens in response to stretch forces in the membrane lipid bilayer. May participate in the regulation of osmotic pressure changes within the cell. This chain is Large-conductance mechanosensitive channel, found in Burkholderia cenocepacia (strain ATCC BAA-245 / DSM 16553 / LMG 16656 / NCTC 13227 / J2315 / CF5610) (Burkholderia cepacia (strain J2315)).